The primary structure comprises 591 residues: L-fucose isomerase (591 aa).

Catalysis depends on proton acceptor residues glutamate 337 and aspartate 361. Mn(2+) contacts are provided by glutamate 337, aspartate 361, and histidine 528.

It belongs to the L-fucose isomerase family. As to quaternary structure, homohexamer. Mn(2+) serves as cofactor.

The protein resides in the cytoplasm. The catalysed reaction is L-fucose = L-fuculose. It functions in the pathway carbohydrate degradation; L-fucose degradation; L-lactaldehyde and glycerone phosphate from L-fucose: step 1/3. Its function is as follows. Converts the aldose L-fucose into the corresponding ketose L-fuculose. This chain is L-fucose isomerase, found in Citrobacter koseri (strain ATCC BAA-895 / CDC 4225-83 / SGSC4696).